The following is a 252-amino-acid chain: Triosephosphate isomerase (252 aa).

9–11 (NWK) provides a ligand contact to substrate. His100 functions as the Electrophile in the catalytic mechanism. Glu171 (proton acceptor) is an active-site residue. Substrate-binding positions include Gly177, Ser216, and 237 to 238 (GG).

It belongs to the triosephosphate isomerase family. In terms of assembly, homodimer.

It localises to the cytoplasm. The catalysed reaction is D-glyceraldehyde 3-phosphate = dihydroxyacetone phosphate. It participates in carbohydrate biosynthesis; gluconeogenesis. The protein operates within carbohydrate degradation; glycolysis; D-glyceraldehyde 3-phosphate from glycerone phosphate: step 1/1. Involved in the gluconeogenesis. Catalyzes stereospecifically the conversion of dihydroxyacetone phosphate (DHAP) to D-glyceraldehyde-3-phosphate (G3P). In Polynucleobacter asymbioticus (strain DSM 18221 / CIP 109841 / QLW-P1DMWA-1) (Polynucleobacter necessarius subsp. asymbioticus), this protein is Triosephosphate isomerase.